Consider the following 588-residue polypeptide: Calicin (588 aa).

The 71-residue stretch at 28-98 folds into the BTB domain; it reads WDIALTVDHH…FYSGKVVISE (71 aa). Serine 149 is subject to Phosphoserine. Kelch repeat units lie at residues 280–327, 328–375, 377–423, 425–475, 476–525, and 526–580; these read SVVI…SAGR, YIYI…TCGG, VYSV…TRGD, NLYI…SFHQ, DNIL…VGDN, and KVFV…LAKL.

Interacts with CYLC1; the interaction may be relevant for proper acrosome attachment to the nuclear envelope. In terms of tissue distribution, expressed in testis and in spermatozoa (at protein level).

It localises to the cytoplasm. The protein localises to the cytoskeleton. The protein resides in the perinuclear theca. It is found in the calyx. Functionally, required for both nuclear and acrosomal shaping during spermiogenesis. In Bos taurus (Bovine), this protein is Calicin (CCIN).